A 185-amino-acid chain; its full sequence is Elongation factor P (185 aa).

It belongs to the elongation factor P family.

It is found in the cytoplasm. It participates in protein biosynthesis; polypeptide chain elongation. In terms of biological role, involved in peptide bond synthesis. Stimulates efficient translation and peptide-bond synthesis on native or reconstituted 70S ribosomes in vitro. Probably functions indirectly by altering the affinity of the ribosome for aminoacyl-tRNA, thus increasing their reactivity as acceptors for peptidyl transferase. This chain is Elongation factor P, found in Desulfitobacterium hafniense (strain DSM 10664 / DCB-2).